Consider the following 305-residue polypeptide: Mas-related G-protein coupled receptor member A7 (305 aa).

Topologically, residues 1-17 are extracellular; the sequence is MDETSPRSIDIESLIPN. The chain crosses the membrane as a helical span at residues 18–38; that stretch reads LMIIIFGLVGLTGNAIVLWLL. The Cytoplasmic portion of the chain corresponds to 39-46; it reads GFCLHRNA. A helical membrane pass occupies residues 47–67; sequence FLVYILNLALADFLFLLCHFI. Residues 68-81 lie on the Extracellular side of the membrane; the sequence is NSAMFLLKVPIPNG. The chain crosses the membrane as a helical span at residues 82 to 102; it reads IFVYCFYTIKMVLYITGLSML. The Cytoplasmic segment spans residues 103–129; the sequence is SAISTERCLSVLCPIWYHCRRPEHTST. Residues 130–150 traverse the membrane as a helical segment; it reads VMCAVIWIFSVLICILKEYFC. The Extracellular portion of the chain corresponds to 151–167; it reads DFFGTKLGNYYVCQASN. Residues 168–188 form a helical membrane-spanning segment; it reads FFMGAYLMFLFVVLCLSTLAL. At 189–211 the chain is on the cytoplasmic side; that stretch reads LARLFCGAEKMKFTRLFVTIMLT. The chain crosses the membrane as a helical span at residues 212–232; the sequence is ILVFLLCGLPWGFFWFLLIWI. The Extracellular segment spans residues 233–244; that stretch reads KGGFSVLDYRLY. The chain crosses the membrane as a helical span at residues 245 to 265; it reads LASIVLTVVNSCANPIIYFFV. Residues 266-305 are Cytoplasmic-facing; it reads GSFRHRLKHQTLKMVLQSALQDTPETHENMVEMSRIKAEQ.

This sequence belongs to the G-protein coupled receptor 1 family. Mas subfamily. Expressed in a subset of sensory neurons that includes nociceptors. Expressed in the subclass of non-peptidergic sensory neurons that are IB4(+) and VR1(-).

It localises to the cell membrane. Functionally, orphan receptor. May be a receptor for RFamide-family neuropeptides such as NPFF and NPAF, which are analgesic in vivo. May regulate nociceptor function and/or development, including the sensation or modulation of pain. The chain is Mas-related G-protein coupled receptor member A7 (Mrgpra7) from Mus musculus (Mouse).